We begin with the raw amino-acid sequence, 100 residues long: EKC/KEOPS complex subunit GON7 (100 aa).

The residue at position 1 (M1) is an N-acetylmethionine. Positions 61-100 are disordered; that stretch reads AAAPDEDLDGDDEDDAEDENNIDNRTNFDGPSAKRPKTPS. Residues 64 to 81 show a composition bias toward acidic residues; sequence PDEDLDGDDEDDAEDENN.

In terms of assembly, component of the EKC/KEOPS complex composed of at least GON7, TP53RK, TPRKB, OSGEP and LAGE3; the whole complex dimerizes.

It is found in the nucleus. In terms of biological role, component of the EKC/KEOPS complex that is required for the formation of a threonylcarbamoyl group on adenosine at position 37 (t(6)A37) in tRNAs that read codons beginning with adenine. The complex is probably involved in the transfer of the threonylcarbamoyl moiety of threonylcarbamoyl-AMP (TC-AMP) to the N6 group of A37. GON7 plays a supporting role to the catalytic subunit OSGEP in the complex. This is EKC/KEOPS complex subunit GON7 from Homo sapiens (Human).